The chain runs to 360 residues: GTP 3',8-cyclase (360 aa).

A disordered region spans residues 1 to 31 (MTVTALGVPTVRGRSEGSAVASDAPGDGPLL). The Radical SAM core domain maps to 33 to 251 (RFGRSATDLR…LQPHFRLRPD (219 aa)). A GTP-binding site is contributed by Arg-42. Cys-49 and Cys-53 together coordinate [4Fe-4S] cluster. Residue Tyr-55 coordinates S-adenosyl-L-methionine. Cys-56 lines the [4Fe-4S] cluster pocket. Arg-93 is a binding site for GTP. Gly-97 contributes to the S-adenosyl-L-methionine binding site. Thr-124 serves as a coordination point for GTP. Position 148 (Ser-148) interacts with S-adenosyl-L-methionine. Lys-185 contacts GTP. S-adenosyl-L-methionine is bound at residue Met-219. Cys-287 and Cys-290 together coordinate [4Fe-4S] cluster. 292 to 294 (RTR) contacts GTP. Cys-304 is a [4Fe-4S] cluster binding site.

The protein belongs to the radical SAM superfamily. MoaA family. In terms of assembly, monomer and homodimer. Requires [4Fe-4S] cluster as cofactor.

The catalysed reaction is GTP + AH2 + S-adenosyl-L-methionine = (8S)-3',8-cyclo-7,8-dihydroguanosine 5'-triphosphate + 5'-deoxyadenosine + L-methionine + A + H(+). It functions in the pathway cofactor biosynthesis; molybdopterin biosynthesis. In terms of biological role, catalyzes the cyclization of GTP to (8S)-3',8-cyclo-7,8-dihydroguanosine 5'-triphosphate. This is GTP 3',8-cyclase from Mycobacterium ulcerans (strain Agy99).